We begin with the raw amino-acid sequence, 83 residues long: MGLLPLVKKLGFIIFLLVSASAFALCSAGRSSILIYSQEDDHPEVVERRIHEHERILRMNSRDYGHSSPKPKLVRPPFKLIPN.

The N-terminal stretch at 1–28 is a signal peptide; the sequence is MGLLPLVKKLGFIIFLLVSASAFALCSA. Positions 61–83 are disordered; it reads SRDYGHSSPKPKLVRPPFKLIPN. A Sulfotyrosine modification is found at Tyr-64. Hydroxyproline is present on residues Pro-69 and Pro-71.

As to quaternary structure, interacts with the specific receptor kinases GSO1 and GSO2. As to expression, expressed exclusively in the root stele.

Peptide hormone required for contiguous Casparian strip diffusion barrier formation in roots via the regulation of CASPs protein expression and distribution in a GSO1-GSO2 signaling pathway. The Casparian strip is required for ion homeostasis (e.g. iron and potassium ions). In Arabidopsis thaliana (Mouse-ear cress), this protein is Protein CASPARIAN STRIP INTEGRITY FACTOR 2.